A 106-amino-acid chain; its full sequence is Large ribosomal subunit protein bL21 (106 aa).

It belongs to the bacterial ribosomal protein bL21 family. Part of the 50S ribosomal subunit. Contacts protein L20.

In terms of biological role, this protein binds to 23S rRNA in the presence of protein L20. This chain is Large ribosomal subunit protein bL21, found in Syntrophobacter fumaroxidans (strain DSM 10017 / MPOB).